A 467-amino-acid polypeptide reads, in one-letter code: UDP-N-acetylmuramate--L-alanine ligase (467 aa).

ATP is bound at residue 114-120 (GTHGKTT).

It belongs to the MurCDEF family.

The protein localises to the cytoplasm. The enzyme catalyses UDP-N-acetyl-alpha-D-muramate + L-alanine + ATP = UDP-N-acetyl-alpha-D-muramoyl-L-alanine + ADP + phosphate + H(+). It participates in cell wall biogenesis; peptidoglycan biosynthesis. Cell wall formation. The chain is UDP-N-acetylmuramate--L-alanine ligase from Bradyrhizobium sp. (strain ORS 278).